The sequence spans 163 residues: Deoxyuridine 5'-triphosphate nucleotidohydrolase (163 aa).

It belongs to the dUTPase family. Mg(2+) serves as cofactor.

It carries out the reaction dUTP + H2O = dUMP + diphosphate + H(+). It participates in pyrimidine metabolism; dUMP biosynthesis; dUMP from dCTP (dUTP route): step 2/2. Its function is as follows. This enzyme is involved in nucleotide metabolism: it produces dUMP, the immediate precursor of thymidine nucleotides and it decreases the intracellular concentration of dUTP so that uracil cannot be incorporated into DNA. The sequence is that of Deoxyuridine 5'-triphosphate nucleotidohydrolase from Galliformes (FAdV-8).